Reading from the N-terminus, the 376-residue chain is Pyrimidine monooxygenase RutA (376 aa).

Residues 61-62, Asn-127, Glu-136, 152-153, and Ser-202 contribute to the FMN site; these read IK and RY.

This sequence belongs to the NtaA/SnaA/DszA monooxygenase family. RutA subfamily.

It catalyses the reaction uracil + FMNH2 + NADH + O2 = (Z)-3-ureidoacrylate + FMN + NAD(+) + H2O + H(+). It carries out the reaction thymine + FMNH2 + NADH + O2 = (Z)-2-methylureidoacrylate + FMN + NAD(+) + H2O + H(+). Its function is as follows. Catalyzes the pyrimidine ring opening between N-3 and C-4 by an unusual flavin hydroperoxide-catalyzed mechanism, adding oxygen atoms in the process to yield ureidoacrylate peracid, that immediately reacts with FMN forming ureidoacrylate and FMN-N(5)-oxide. The FMN-N(5)-oxide reacts spontaneously with NADH to produce FMN. Requires the flavin reductase RutF to regenerate FMN in vivo. The polypeptide is Pyrimidine monooxygenase RutA (Methylorubrum extorquens (strain CM4 / NCIMB 13688) (Methylobacterium extorquens)).